A 476-amino-acid chain; its full sequence is Cytochrome P450 monooxygenase ppzE (476 aa).

Residue Cys-452 coordinates heme.

The protein belongs to the cytochrome P450 family. The cofactor is heme.

The protein operates within secondary metabolite biosynthesis. Cytochrome P450 monooxygenase; part of the gene cluster that mediates the biosynthesis of pyrrolopyrazines, secondary metabolites showing insecticidal activity. The role of ppzE within the pathway has still to be determined. The single multifunctional NRPS ppzA is sufficient to produce peramine via condensation of 1-pyrroline-5-carboxylate and arginine, N-methylation of the alpha-amino group of arginine and reduction of the thioester and the cyclization to form an iminium ion resulting in release from the peptide synthetase. Deprotonation of this intermediate and oxidation of the pyrroline ring would give rise to peramine. In Epichloe species that produce only peramine, the peramine synthetase gene is not localized in a gene cluster, in contrast to Metarhizium species that contain additional pyrrolopyrazine biosynthesis genes. The 2-oxoglutarate-Fe(II) type oxidoreductase ppzC hydroxylates peramine to yield the newly identified compound 8-hydroxyperamine whereas ppzD converts L-proline into trans-4-hydroxy-L-proline, a precursor of peramine biosynthesis. This chain is Cytochrome P450 monooxygenase ppzE, found in Metarhizium majus (strain ARSEF 297).